A 578-amino-acid polypeptide reads, in one-letter code: Arginine--tRNA ligase (578 aa).

Positions 127–137 (PNLAKEMHVGH) match the 'HIGH' region motif.

Belongs to the class-I aminoacyl-tRNA synthetase family. As to quaternary structure, monomer.

It localises to the cytoplasm. The enzyme catalyses tRNA(Arg) + L-arginine + ATP = L-arginyl-tRNA(Arg) + AMP + diphosphate. In Pseudomonas fluorescens (strain ATCC BAA-477 / NRRL B-23932 / Pf-5), this protein is Arginine--tRNA ligase.